We begin with the raw amino-acid sequence, 122 residues long: Small ribosomal subunit protein uS13 (122 aa).

Positions 97 to 122 (PCRGQRTKTNARTRKGPARTVAGKKK) are disordered.

It belongs to the universal ribosomal protein uS13 family. Part of the 30S ribosomal subunit. Forms a loose heterodimer with protein S19. Forms two bridges to the 50S subunit in the 70S ribosome.

In terms of biological role, located at the top of the head of the 30S subunit, it contacts several helices of the 16S rRNA. In the 70S ribosome it contacts the 23S rRNA (bridge B1a) and protein L5 of the 50S subunit (bridge B1b), connecting the 2 subunits; these bridges are implicated in subunit movement. Contacts the tRNAs in the A and P-sites. The polypeptide is Small ribosomal subunit protein uS13 (Geobacter sp. (strain M21)).